A 427-amino-acid chain; its full sequence is Protein TIFY 6a (427 aa).

Over residues 1–25 (MERDFLGAIWRKEEAAGKPEEHSDY) the composition is skewed to basic and acidic residues. Disordered regions lie at residues 1-32 (MERD…GGGA) and 128-154 (YGVA…HANP). Pro residues predominate over residues 136–146 (FPSPSPSPRHP). A Tify domain is found at 196 to 231 (QNPKVTQMTIFYDGLVNVFDNIPVEKAQELMLLASR). Residues 296 to 327 (SFSSSNDSAGPKSGGLPLAVTPLSQASPSQPI) form a disordered region. A compositionally biased stretch (polar residues) spans 317–327 (PLSQASPSQPI). A Jas motif is present at residues 343-367 (PQARKASLARFLEKRKERVSSVAPY). Residues 345–352 (ARKASLAR) carry the Nuclear localization signal motif. The interval 361-427 (VSSVAPYPSS…QEPPSTKLQI (67 aa)) is disordered. 2 stretches are compositionally biased toward polar residues: residues 369–402 (SSKS…NNCE) and 411–427 (RNIS…KLQI).

The protein belongs to the TIFY/JAZ family. As to quaternary structure, interacts with COI1A. Interacts with COI1A and COI1B in a coronatine-dependent manner. Coronatine is an analog of jasmonoyl isoleucine (JA-Ile). Post-translationally, ubiquitinated. Targeted for degradation by the SCF(COI1) E3 ubiquitin ligase-proteasome pathway during jasmonate signaling.

It localises to the nucleus. Functionally, repressor of jasmonate responses. This chain is Protein TIFY 6a, found in Oryza sativa subsp. japonica (Rice).